A 182-amino-acid polypeptide reads, in one-letter code: Probable inosine/xanthosine triphosphatase (182 aa).

Mg(2+) contacts are provided by Glu-42 and Asp-69.

Belongs to the YjjX NTPase family. In terms of assembly, homodimer. Mg(2+) serves as cofactor. The cofactor is Mn(2+).

The catalysed reaction is XTP + H2O = XDP + phosphate + H(+). It carries out the reaction ITP + H2O = IDP + phosphate + H(+). Functionally, phosphatase that hydrolyzes non-canonical purine nucleotides such as XTP and ITP to their respective diphosphate derivatives. Probably excludes non-canonical purines from DNA/RNA precursor pool, thus preventing their incorporation into DNA/RNA and avoiding chromosomal lesions. The chain is Probable inosine/xanthosine triphosphatase from Methanothermobacter thermautotrophicus (strain ATCC 29096 / DSM 1053 / JCM 10044 / NBRC 100330 / Delta H) (Methanobacterium thermoautotrophicum).